The sequence spans 349 residues: Protein-glutamate methylesterase/protein-glutamine glutaminase (349 aa).

In terms of domain architecture, Response regulatory spans 5–122 (RVLSVDDSAL…REGMLAYSEM (118 aa)). At Asp-56 the chain carries 4-aspartylphosphate. Residues 152–344 (LLSSEKLIAI…QQMLAKISAG (193 aa)) enclose the CheB-type methylesterase domain. Residues Ser-164, His-190, and Asp-286 contribute to the active site.

It belongs to the CheB family. Phosphorylated by CheA. Phosphorylation of the N-terminal regulatory domain activates the methylesterase activity.

The protein localises to the cytoplasm. It carries out the reaction [protein]-L-glutamate 5-O-methyl ester + H2O = L-glutamyl-[protein] + methanol + H(+). The enzyme catalyses L-glutaminyl-[protein] + H2O = L-glutamyl-[protein] + NH4(+). In terms of biological role, involved in chemotaxis. Part of a chemotaxis signal transduction system that modulates chemotaxis in response to various stimuli. Catalyzes the demethylation of specific methylglutamate residues introduced into the chemoreceptors (methyl-accepting chemotaxis proteins or MCP) by CheR. Also mediates the irreversible deamidation of specific glutamine residues to glutamic acid. The polypeptide is Protein-glutamate methylesterase/protein-glutamine glutaminase (Salmonella choleraesuis (strain SC-B67)).